We begin with the raw amino-acid sequence, 558 residues long: Putative ABC transporter ATP-binding protein gbs1680 (558 aa).

2 consecutive ABC transporter domains span residues 5 to 246 and 295 to 527; these read IEWK…GIRE and LSVQ…THLK. ATP-binding positions include 39–46 and 328–335; these read GPSGSGKS and GKNGAGKS.

It belongs to the ABC transporter superfamily.

The protein localises to the cell membrane. Its function is as follows. Probably part of an ABC transporter complex. Responsible for energy coupling to the transport system. The chain is Putative ABC transporter ATP-binding protein gbs1680 from Streptococcus agalactiae serotype III (strain NEM316).